A 283-amino-acid polypeptide reads, in one-letter code: Pantothenate synthetase (283 aa).

30 to 37 (MGNLHLGH) lines the ATP pocket. The active-site Proton donor is the His-37. (R)-pantoate is bound at residue Gln-61. Gln-61 is a beta-alanine binding site. 149–152 (GQKD) serves as a coordination point for ATP. Gln-155 provides a ligand contact to (R)-pantoate. Residues Ile-178 and 186–189 (MSSR) each bind ATP.

This sequence belongs to the pantothenate synthetase family. In terms of assembly, homodimer.

Its subcellular location is the cytoplasm. The enzyme catalyses (R)-pantoate + beta-alanine + ATP = (R)-pantothenate + AMP + diphosphate + H(+). The protein operates within cofactor biosynthesis; (R)-pantothenate biosynthesis; (R)-pantothenate from (R)-pantoate and beta-alanine: step 1/1. In terms of biological role, catalyzes the condensation of pantoate with beta-alanine in an ATP-dependent reaction via a pantoyl-adenylate intermediate. This chain is Pantothenate synthetase, found in Shewanella pealeana (strain ATCC 700345 / ANG-SQ1).